Reading from the N-terminus, the 607-residue chain is NAD-dependent malic enzyme 2, mitochondrial (607 aa).

The transit peptide at 1-32 directs the protein to the mitochondrion; sequence MMWKNIAGLSKAAAAARTHGSRRCFSTAIPGP. Catalysis depends on tyrosine 136, which acts as the Proton donor. Position 189 (arginine 189) interacts with NAD(+). Lysine 207 acts as the Proton acceptor in catalysis. Residues glutamate 278, aspartate 279, and aspartate 302 each coordinate a divalent metal cation. NAD(+) contacts are provided by aspartate 302 and asparagine 449.

This sequence belongs to the malic enzymes family. As to quaternary structure, homodimer. Heterodimer of two related subunits in NAD-MEH complex. Interacts with NAD-ME1. It depends on Mg(2+) as a cofactor. Mn(2+) serves as cofactor. In terms of tissue distribution, expressed in leaves, stems, flowers, and roots (at protein level). Present in pollen.

Its subcellular location is the mitochondrion. The catalysed reaction is (S)-malate + NAD(+) = pyruvate + CO2 + NADH. Its activity is regulated as follows. Activated by 2-ketoglutarate, phosphoenolpyruvate (PEP), fructose 1,6-biphosphate (FBP) and coenzyme A (acetyl-CoA and CoA) as homodimer and by oxaloacetate (OAA), 2-ketoglutarate, succinate, fumarate and CoA as heterodimer NAD-MEH. Repressed by succinate and fumarate as homodimer, in the presence of NAD(+) and competitively toward the substrate L-malate. Functionally, involved in the regulation of sugars and amino acids metabolisms during the night period. The protein is NAD-dependent malic enzyme 2, mitochondrial (NAD-ME2) of Arabidopsis thaliana (Mouse-ear cress).